The following is a 305-amino-acid chain: uncharacterized protein (305 aa).

Residues 208–236 (SYAQSPAVKKKKWRHSGGKKNNPRENHID) are disordered. Over residues 215 to 225 (VKKKKWRHSGG) the composition is skewed to basic residues.

This is an uncharacterized protein from Bacillus subtilis (strain 168).